Here is a 359-residue protein sequence, read N- to C-terminus: Small ribosomal subunit protein mS22 (359 aa).

The tract at residues 40-65 is disordered; sequence RPQPFEVGQPRRLLSSEAESGSSEVK. Residue Ser54 is modified to Phosphoserine. Lys210 carries the post-translational modification N6-acetyllysine.

The protein belongs to the mitochondrion-specific ribosomal protein mS22 family. In terms of assembly, component of the mitochondrial ribosome small subunit (28S) which comprises a 12S rRNA and about 30 distinct proteins.

It localises to the mitochondrion. In Mus musculus (Mouse), this protein is Small ribosomal subunit protein mS22 (Mrps22).